Here is a 262-residue protein sequence, read N- to C-terminus: Phosphatidylserine decarboxylase proenzyme (262 aa).

Active-site charge relay system; for autoendoproteolytic cleavage activity residues include aspartate 86, histidine 142, and serine 226. Serine 226 acts as the Schiff-base intermediate with substrate; via pyruvic acid; for decarboxylase activity in catalysis. Serine 226 bears the Pyruvic acid (Ser); by autocatalysis mark.

It belongs to the phosphatidylserine decarboxylase family. PSD-B subfamily. Prokaryotic type I sub-subfamily. As to quaternary structure, heterodimer of a large membrane-associated beta subunit and a small pyruvoyl-containing alpha subunit. The cofactor is pyruvate. Post-translationally, is synthesized initially as an inactive proenzyme. Formation of the active enzyme involves a self-maturation process in which the active site pyruvoyl group is generated from an internal serine residue via an autocatalytic post-translational modification. Two non-identical subunits are generated from the proenzyme in this reaction, and the pyruvate is formed at the N-terminus of the alpha chain, which is derived from the carboxyl end of the proenzyme. The autoendoproteolytic cleavage occurs by a canonical serine protease mechanism, in which the side chain hydroxyl group of the serine supplies its oxygen atom to form the C-terminus of the beta chain, while the remainder of the serine residue undergoes an oxidative deamination to produce ammonia and the pyruvoyl prosthetic group on the alpha chain. During this reaction, the Ser that is part of the protease active site of the proenzyme becomes the pyruvoyl prosthetic group, which constitutes an essential element of the active site of the mature decarboxylase.

It is found in the cell membrane. The catalysed reaction is a 1,2-diacyl-sn-glycero-3-phospho-L-serine + H(+) = a 1,2-diacyl-sn-glycero-3-phosphoethanolamine + CO2. The protein operates within phospholipid metabolism; phosphatidylethanolamine biosynthesis; phosphatidylethanolamine from CDP-diacylglycerol: step 2/2. Its function is as follows. Catalyzes the formation of phosphatidylethanolamine (PtdEtn) from phosphatidylserine (PtdSer). This is Phosphatidylserine decarboxylase proenzyme from Bacillus anthracis.